A 233-amino-acid polypeptide reads, in one-letter code: Large ribosomal subunit protein uL1 (233 aa).

Belongs to the universal ribosomal protein uL1 family. Part of the 50S ribosomal subunit.

Functionally, binds directly to 23S rRNA. The L1 stalk is quite mobile in the ribosome, and is involved in E site tRNA release. Protein L1 is also a translational repressor protein, it controls the translation of the L11 operon by binding to its mRNA. The protein is Large ribosomal subunit protein uL1 of Polynucleobacter asymbioticus (strain DSM 18221 / CIP 109841 / QLW-P1DMWA-1) (Polynucleobacter necessarius subsp. asymbioticus).